The following is a 445-amino-acid chain: uncharacterized protein (445 aa).

A run of 8 helical transmembrane segments spans residues 16 to 36 (IVSLGVTASSFLFINGVAFLI), 52 to 72 (LLASMPSWGLVVTMFAWGYLL), 98 to 118 (VHSLLWIGVFLFLGGMAAGGC), 168 to 188 (GLMFPAVVCTLAAVASVLGIV), 219 to 239 (ASALLMMPQTVTVTFMLVWLI), 243 to 263 (GWSVAQAGVLVTISQLLGALG), 283 to 303 (LIAAAAAATLFLLAAVDNEGS), and 366 to 386 (AAYPTAWALCGVFPLAAVPLV). The tract at residues 417–445 (AWPNGPRRPGPPGQPRRVRQGGTAITPPT) is disordered.

This sequence belongs to the major facilitator superfamily.

The protein localises to the cell membrane. This is an uncharacterized protein from Mycobacterium tuberculosis (strain ATCC 25618 / H37Rv).